The sequence spans 426 residues: Docking protein 3 (426 aa).

In terms of domain architecture, PH spans 4–115 (PVKDGIIYVQ…WIEQLCQLAF (112 aa)). Residues 145–249 (DLTEFPVLVL…ACQQQGQESP (105 aa)) enclose the IRS-type PTB domain. The segment at 243 to 282 (QQGQESPQPSAQGLSNQPWGAEAEDPQCSPTLGRAHSGSH) is disordered. Residues 247–260 (ESPQPSAQGLSNQP) are compositionally biased toward polar residues. Phosphotyrosine is present on Y331. The tract at residues 357-426 (GCRQAPEGHS…RDGPGARDWS (70 aa)) is disordered. The segment covering 402-411 (KPQRTLRAKL) has biased composition (basic residues).

The protein belongs to the DOK family. Type A subfamily. As to quaternary structure, homooligomer. Interacts with GRB2 and INPP5D/SHIP. Tyrosine-phosphorylated in the presence of GRB2.

The protein resides in the cytoplasm. It localises to the cell membrane. In terms of biological role, DOK proteins are enzymatically inert adaptor or scaffolding proteins. They provide a docking platform for the assembly of multimolecular signaling complexes. Plays a role as negative regulator of the mobilization of calcium ions and of calcium signaling. The sequence is that of Docking protein 3 (DOK3) from Gallus gallus (Chicken).